A 604-amino-acid polypeptide reads, in one-letter code: Sulfite reductase [NADPH] flavoprotein alpha-component (604 aa).

The 139-residue stretch at 68–206 (LSIIFASQTG…PAAEWRKQAL (139 aa)) folds into the Flavodoxin-like domain. FMN contacts are provided by residues 74-79 (SQTGNA), 121-124 (STNG), and 157-166 (LGDSSYEFFC). Residues 239–453 (QNPYTATLLT…VEHNNNFKLP (215 aa)) enclose the FAD-binding FR-type domain. FAD-binding positions include threonine 327, glycine 361, 391–394 (RLYS), 409–411 (TVG), tyrosine 415, and 424–427 (GGAS). Residues 524–525 (SR), 530–534 (KVYVQ), and aspartate 566 contribute to the NADP(+) site. Tyrosine 604 serves as a coordination point for FAD.

Belongs to the NADPH-dependent sulphite reductase flavoprotein subunit CysJ family. The protein in the N-terminal section; belongs to the flavodoxin family. It in the C-terminal section; belongs to the flavoprotein pyridine nucleotide cytochrome reductase family. Alpha(8)-beta(8). The alpha component is a flavoprotein, the beta component is a hemoprotein. FAD is required as a cofactor. FMN serves as cofactor.

The catalysed reaction is hydrogen sulfide + 3 NADP(+) + 3 H2O = sulfite + 3 NADPH + 4 H(+). The protein operates within sulfur metabolism; hydrogen sulfide biosynthesis; hydrogen sulfide from sulfite (NADPH route): step 1/1. Component of the sulfite reductase complex that catalyzes the 6-electron reduction of sulfite to sulfide. This is one of several activities required for the biosynthesis of L-cysteine from sulfate. The flavoprotein component catalyzes the electron flow from NADPH -&gt; FAD -&gt; FMN to the hemoprotein component. The sequence is that of Sulfite reductase [NADPH] flavoprotein alpha-component from Aliivibrio fischeri (strain ATCC 700601 / ES114) (Vibrio fischeri).